Here is a 414-residue protein sequence, read N- to C-terminus: CCA-adding enzyme (414 aa).

Positions 8 and 11 each coordinate ATP. The CTP site is built by Gly-8 and Arg-11. 2 residues coordinate Mg(2+): Asp-21 and Asp-23. Arg-91, Arg-137, and Arg-140 together coordinate ATP. Residues Arg-91, Arg-137, and Arg-140 each contribute to the CTP site.

This sequence belongs to the tRNA nucleotidyltransferase/poly(A) polymerase family. Bacterial CCA-adding enzyme type 2 subfamily. Requires Mg(2+) as cofactor.

The catalysed reaction is a tRNA precursor + 2 CTP + ATP = a tRNA with a 3' CCA end + 3 diphosphate. It catalyses the reaction a tRNA with a 3' CCA end + 2 CTP + ATP = a tRNA with a 3' CCACCA end + 3 diphosphate. Functionally, catalyzes the addition and repair of the essential 3'-terminal CCA sequence in tRNAs without using a nucleic acid template. Adds these three nucleotides in the order of C, C, and A to the tRNA nucleotide-73, using CTP and ATP as substrates and producing inorganic pyrophosphate. tRNA 3'-terminal CCA addition is required both for tRNA processing and repair. Also involved in tRNA surveillance by mediating tandem CCA addition to generate a CCACCA at the 3' terminus of unstable tRNAs. While stable tRNAs receive only 3'-terminal CCA, unstable tRNAs are marked with CCACCA and rapidly degraded. This chain is CCA-adding enzyme, found in Buchnera aphidicola subsp. Acyrthosiphon pisum (strain Tuc7).